The primary structure comprises 405 residues: Glucan 1,3-beta-glucosidase A (405 aa).

An N-terminal signal peptide occupies residues 1 to 14 (MLPLLLCIVPYCWS). Residue Glu199 is the Proton donor of the active site. 2 disulfide bridges follow: Cys280–Cys405 and Cys306–Cys332. Glu298 acts as the Nucleophile in catalysis.

Belongs to the glycosyl hydrolase 5 (cellulase A) family. As to quaternary structure, monomer. It depends on Mn(2+) as a cofactor.

The protein localises to the secreted. It catalyses the reaction Successive hydrolysis of beta-D-glucose units from the non-reducing ends of (1-&gt;3)-beta-D-glucans, releasing alpha-glucose.. Functionally, beta-glucanases participate in the metabolism of beta-glucan, the main structural component of the cell wall. It could also function biosynthetically as a transglycosylase. The chain is Glucan 1,3-beta-glucosidase A (exgA) from Aspergillus oryzae (strain ATCC 42149 / RIB 40) (Yellow koji mold).